The primary structure comprises 304 residues: MLRLRCKTREGTQLLQGLTDRSSIRELQERIAGVTGISGPLQRVMVGFPPLSLDLSDEEATLKNMSIKSGDTLIVEEDKSKLRSATPPVSKTDIGNWNAPAQPTIVRRVVPADNSCLFTSIYYVVEGGVYDPACALEMRSLIAEIVASDQSAYCDAVLGKSNEEYCSWIRREDTWGGAIEVSILSKFYQCEICVVDTQTVRIDRFGEDSGYTKRVLLIYDGIHYDPLQRQFPDPDMPPMTVFSTTDDEALVQAMELADDARKKRQFTDVNQFALRCMACQKGLTGQSAARDHAKETGHTNFGEV.

The tract at residues 5–83 is UBX-like; it reads RCKTREGTQL…IVEEDKSKLR (79 aa). In terms of domain architecture, OTU spans 105–230; that stretch reads IVRRVVPADN…GIHYDPLQRQ (126 aa). Positions 110 to 116 are cys-loop; that stretch reads VPADNSC. Asp113 is an active-site residue. Cys116 (nucleophile) is an active-site residue. Residues 169–179 are variable-loop; sequence IRREDTWGGAI. Residues 219 to 223 form a his-loop region; the sequence is YDGIH. Ile222 contributes to the substrate binding site. Residue His223 is part of the active site. Residues 247–252 form an S2 site region; that stretch reads DEALVQ. A C2H2-type zinc finger spans residues 274-298; that stretch reads LRCMACQKGLTGQSAARDHAKETGH. Residue His298 is part of the active site.

The protein localises to the cytoplasm. It catalyses the reaction Thiol-dependent hydrolysis of ester, thioester, amide, peptide and isopeptide bonds formed by the C-terminal Gly of ubiquitin (a 76-residue protein attached to proteins as an intracellular targeting signal).. Its function is as follows. Hydrolase that can remove conjugated ubiquitin from proteins and participates in endoplasmic reticulum-associated degradation (ERAD) for misfolded lumenal proteins. May act by triming the ubiquitin chain on the associated substrate to facilitate their threading through the VCP/p97 pore. Ubiquitin moieties on substrates may present a steric impediment to the threading process when the substrate is transferred to the VCP pore and threaded through VCP's axial channel. Mediates deubiquitination of 'Lys-27'-, 'Lys-29'- and 'Lys-33'-linked polyubiquitin chains. Also able to hydrolyze 'Lys-11'-linked ubiquitin chains. Cleaves both polyubiquitin and di-ubiquitin. The polypeptide is Ubiquitin thioesterase OTU1 (yod1) (Xenopus laevis (African clawed frog)).